Here is a 63-residue protein sequence, read N- to C-terminus: Short neurotoxin 2 (63 aa).

Intrachain disulfides connect Cys-3–Cys-21, Cys-15–Cys-39, Cys-43–Cys-49, and Cys-50–Cys-55.

It belongs to the three-finger toxin family. Short-chain subfamily. Orphan group XVIII sub-subfamily. In terms of tissue distribution, expressed by the venom gland.

It is found in the secreted. Its function is as follows. Blocks both the muscle-twitch response to nerve stimulation and the response to exogenous acetylcholine. In Bungarus fasciatus (Banded krait), this protein is Short neurotoxin 2.